The following is a 514-amino-acid chain: Coiled-coil domain-containing protein 174 (514 aa).

Disordered stretches follow at residues 42–83 and 137–162; these read AKPK…DQSR and TLEK…PDEE. Over residues 63-83 the composition is skewed to basic and acidic residues; that stretch reads KRAEKDIEQKAEEDQTLDQSR. The stretch at 66 to 98 forms a coiled coil; sequence EKDIEQKAEEDQTLDQSRKKLEEKAKLYEKMTK. A compositionally biased stretch (acidic residues) spans 141–162; it reads ETDDEEIEPEMEIPPPEDPDEE. Coiled coils occupy residues 203–227 and 266–321; these read LLSE…ALRK and LDML…LENG. Disordered regions lie at residues 270–291 and 306–490; these read REQT…KAAL and LREE…PSAH. Basic and acidic residues-rich tracts occupy residues 335–354 and 376–388; these read EVPR…RDTK and KKQE…RDPE. Positions 405-418 are enriched in polar residues; that stretch reads YSSQNLNSPETSPG. A compositionally biased stretch (basic and acidic residues) spans 420–429; it reads TEPEISENQK.

Its subcellular location is the nucleus. Probably involved in neuronal development. In Gallus gallus (Chicken), this protein is Coiled-coil domain-containing protein 174 (CCDC174).